A 477-amino-acid chain; its full sequence is Exodeoxyribonuclease 7 large subunit (477 aa).

The disordered stretch occupies residues 456-477; the sequence is GGTVAPRKAPPKKPGGGQGSLL.

It belongs to the XseA family. Heterooligomer composed of large and small subunits.

The protein resides in the cytoplasm. The enzyme catalyses Exonucleolytic cleavage in either 5'- to 3'- or 3'- to 5'-direction to yield nucleoside 5'-phosphates.. Bidirectionally degrades single-stranded DNA into large acid-insoluble oligonucleotides, which are then degraded further into small acid-soluble oligonucleotides. This chain is Exodeoxyribonuclease 7 large subunit, found in Parvibaculum lavamentivorans (strain DS-1 / DSM 13023 / NCIMB 13966).